A 435-amino-acid polypeptide reads, in one-letter code: NAD-specific glutamate dehydrogenase A (435 aa).

The segment at 1–28 is disordered; it reads MTMASKSDSTHDESGDEAADSTEPESAL. Residues 14 to 23 are compositionally biased toward acidic residues; that stretch reads SGDEAADSTE. Lys-126 is a catalytic residue.

Belongs to the Glu/Leu/Phe/Val dehydrogenases family. Homohexamer. The N-terminus is blocked.

It catalyses the reaction L-glutamate + NAD(+) + H2O = 2-oxoglutarate + NH4(+) + NADH + H(+). Inhibited by ethanol, acetone, acetonitrile and 2-propanol (65 to 70% inhibition) and to a lesser extent by methanol and dimethyl formamide (26 and 49 % inhibition respectively). No effect of glycerol or DMSO. The sequence is that of NAD-specific glutamate dehydrogenase A (gdhX) from Halobacterium salinarum (Halobacterium halobium).